The following is a 381-amino-acid chain: MLEKLNNINFNNISNNLNLGIEVGREIQNASWIKSPFFSITGTGADRGVRLFSVASQQPFRPRIKAQLSGSGVSGNTDFEANYDNLEILSQTIYPDAFGNSLRSKIKAYSELERIDFIKESVDSLTTWMNEERDKRIVASLTNDFTNYLYTQTMNVATIRKAIFHARNGLKGDNSKAFPIKPIRATMQSVGNVMVQNTSYIILLDSYQANQLKADSEFKELRKLYAFAGEDKGMLYSGLLGVIDNCPVIDAGVWNKFNVGMPNSSISDSDFMRYLNKANVSSIVTPRQFKEKLNQEKDEKKRSINKEISIGCLIGASAVLLAGSKETRFYIDETVDAGRKSLVGVDCLLGVSKARYQSTDGVVTPYDNQDYAVIGLVSDME.

Residues 287–307 (RQFKEKLNQEKDEKKRSINKE) adopt a coiled-coil conformation.

The chain is Major structural protein ORF14 from Helicobacter pylori (strain 35A).